A 385-amino-acid polypeptide reads, in one-letter code: UPF0496 protein At3g28290 (385 aa).

Residues 138 to 214 are a coiled coil; that stretch reads KDKENDVGKK…IEMEISSRKK (77 aa). The next 2 helical transmembrane spans lie at 217–237 and 242–262; these read IISNVLFIGAFVAVAVGSMVL and VGAGVGVAGLLSLPLIAIGWV. Residues 267 to 294 adopt a coiled-coil conformation; that stretch reads ILENKIQAREKQEEALKKAHRIANEMDK.

This sequence belongs to the UPF0496 family. Widely expressed.

It is found in the membrane. The protein is UPF0496 protein At3g28290 of Arabidopsis thaliana (Mouse-ear cress).